We begin with the raw amino-acid sequence, 130 residues long: Small ribosomal subunit protein uS9 (130 aa).

It belongs to the universal ribosomal protein uS9 family.

The polypeptide is Small ribosomal subunit protein uS9 (Methylibium petroleiphilum (strain ATCC BAA-1232 / LMG 22953 / PM1)).